Consider the following 354-residue polypeptide: Glutamine synthetase (354 aa).

The 80-residue stretch at 22-101 folds into the GS beta-grasp domain; that stretch reads FHAEYVWIDG…VLSETYNNDG (80 aa). Residues 108 to 354 enclose the GS catalytic domain; it reads HRHHTAKVME…IIIETTILDK (247 aa).

The protein belongs to the glutamine synthetase family. Homooctamer.

It localises to the cytoplasm. It carries out the reaction L-glutamate + NH4(+) + ATP = L-glutamine + ADP + phosphate + H(+). In Amanita muscaria (Fly agaric), this protein is Glutamine synthetase (GLN1).